The sequence spans 401 residues: Argininosuccinate synthase (401 aa).

Ala-9–Ser-17 is an ATP binding site. Tyr-86 is a binding site for L-citrulline. Residue Gly-116 coordinates ATP. L-aspartate is bound by residues Thr-118, Asn-122, and Asp-123. An L-citrulline-binding site is contributed by Asn-122. Residues Arg-126, Ser-174, Ser-183, Glu-259, and Tyr-271 each coordinate L-citrulline.

The protein belongs to the argininosuccinate synthase family. Type 1 subfamily. In terms of assembly, homotetramer.

It localises to the cytoplasm. The catalysed reaction is L-citrulline + L-aspartate + ATP = 2-(N(omega)-L-arginino)succinate + AMP + diphosphate + H(+). The protein operates within amino-acid biosynthesis; L-arginine biosynthesis; L-arginine from L-ornithine and carbamoyl phosphate: step 2/3. The sequence is that of Argininosuccinate synthase from Bacillus anthracis (strain A0248).